The sequence spans 334 residues: Phospho-N-acetylmuramoyl-pentapeptide-transferase (334 aa).

Transmembrane regions (helical) follow at residues 5–25 (VVWL…PVTI), 52–72 (PTMG…VLLV), 81–101 (GLVV…DDFI), 116–136 (KILG…FKLG), 148–168 (GISF…VLLG), 181–200 (GLAS…LALV), 230–250 (VFMG…GAVV), 256–276 (LLVV…IQVI), and 309–329 (FWLL…DFWL).

The protein belongs to the glycosyltransferase 4 family. MraY subfamily. Mg(2+) serves as cofactor.

Its subcellular location is the cell membrane. It catalyses the reaction UDP-N-acetyl-alpha-D-muramoyl-L-alanyl-gamma-D-glutamyl-meso-2,6-diaminopimeloyl-D-alanyl-D-alanine + di-trans,octa-cis-undecaprenyl phosphate = di-trans,octa-cis-undecaprenyl diphospho-N-acetyl-alpha-D-muramoyl-L-alanyl-D-glutamyl-meso-2,6-diaminopimeloyl-D-alanyl-D-alanine + UMP. The protein operates within cell wall biogenesis; peptidoglycan biosynthesis. In terms of biological role, catalyzes the initial step of the lipid cycle reactions in the biosynthesis of the cell wall peptidoglycan: transfers peptidoglycan precursor phospho-MurNAc-pentapeptide from UDP-MurNAc-pentapeptide onto the lipid carrier undecaprenyl phosphate, yielding undecaprenyl-pyrophosphoryl-MurNAc-pentapeptide, known as lipid I. The sequence is that of Phospho-N-acetylmuramoyl-pentapeptide-transferase from Desulforamulus reducens (strain ATCC BAA-1160 / DSM 100696 / MI-1) (Desulfotomaculum reducens).